Reading from the N-terminus, the 165-residue chain is Thiol peroxidase (165 aa).

Residues 18-164 (RKVGDKAPNF…YEAAIEAAKK (147 aa)) enclose the Thioredoxin domain. Cys-60 serves as the catalytic Cysteine sulfenic acid (-SOH) intermediate. Cysteines 60 and 94 form a disulfide.

Belongs to the peroxiredoxin family. Tpx subfamily. As to quaternary structure, homodimer.

The catalysed reaction is a hydroperoxide + [thioredoxin]-dithiol = an alcohol + [thioredoxin]-disulfide + H2O. Thiol-specific peroxidase that catalyzes the reduction of hydrogen peroxide and organic hydroperoxides to water and alcohols, respectively. Plays a role in cell protection against oxidative stress by detoxifying peroxides. This Listeria monocytogenes serotype 4b (strain F2365) protein is Thiol peroxidase.